We begin with the raw amino-acid sequence, 267 residues long: Sorbitol-6-phosphate 2-dehydrogenase (267 aa).

NAD(+) is bound at residue 9–38; it reads DNVIIVTGGASGIGLAIVDELLSQGAHVQM. A substrate-binding site is contributed by Ser147. Tyr160 (proton acceptor) is an active-site residue.

Belongs to the short-chain dehydrogenases/reductases (SDR) family. As to quaternary structure, homotetramer.

The catalysed reaction is D-sorbitol 6-phosphate + NAD(+) = beta-D-fructose 6-phosphate + NADH + H(+). It participates in carbohydrate metabolism; D-sorbitol degradation; D-fructose 6-phosphate from D-sorbitol 6-phosphate: step 1/1. The chain is Sorbitol-6-phosphate 2-dehydrogenase (sorD) from Klebsiella pneumoniae.